The chain runs to 879 residues: Alanine--tRNA ligase (879 aa).

Residues His-564, His-568, Cys-666, and His-670 each contribute to the Zn(2+) site.

It belongs to the class-II aminoacyl-tRNA synthetase family. Requires Zn(2+) as cofactor.

The protein resides in the cytoplasm. It catalyses the reaction tRNA(Ala) + L-alanine + ATP = L-alanyl-tRNA(Ala) + AMP + diphosphate. In terms of biological role, catalyzes the attachment of alanine to tRNA(Ala) in a two-step reaction: alanine is first activated by ATP to form Ala-AMP and then transferred to the acceptor end of tRNA(Ala). Also edits incorrectly charged Ser-tRNA(Ala) and Gly-tRNA(Ala) via its editing domain. The protein is Alanine--tRNA ligase of Crocosphaera subtropica (strain ATCC 51142 / BH68) (Cyanothece sp. (strain ATCC 51142)).